Reading from the N-terminus, the 111-residue chain is FK506-binding protein 1 (111 aa).

The segment at 1–20 (MGVEKTIITQGSGPSPQVGQ) is disordered. Polar residues predominate over residues 7–20 (IITQGSGPSPQVGQ). A PPIase FKBP-type domain is found at 19–111 (GQKVTMEYTG…IFDVELKKIG (93 aa)).

Belongs to the FKBP-type PPIase family. FKBP1 subfamily.

It is found in the cytoplasm. It catalyses the reaction [protein]-peptidylproline (omega=180) = [protein]-peptidylproline (omega=0). Its activity is regulated as follows. Inhibited by both FK506 and rapamycin. In terms of biological role, PPIases accelerate the folding of proteins. It catalyzes the cis-trans isomerization of proline imidic peptide bonds in oligopeptides. The sequence is that of FK506-binding protein 1 (FPR1) from Gibberella zeae (strain ATCC MYA-4620 / CBS 123657 / FGSC 9075 / NRRL 31084 / PH-1) (Wheat head blight fungus).